A 504-amino-acid polypeptide reads, in one-letter code: MSKQDGKLTGLFGAPVSDRENSMTAGQRGPLLMQDVYYLEQISHFDREVIPERRMHAKGSGAFGTFTVTNDITQYTNAKIFSEVGKQTEMFARFSTVSGERGAADLERDIRGFALKFYTEDGNWDLVGNNTPVFFFRDPKLFISLNRAVKRDPRTNMRSAQNNWDFWTGLPEALHQVTILMSDRGMPKGFRNMHGFGSHTYSMYNDKGERVWVKYHFRTQQGIENYTDEEAAKIVGMDRDSSQRDLYNAIENGDYPKWKMYIQVMTEEQAKNHPDNPFDLTKVWYKKDYPLIEVGEFELNRNPENYFLDVEQAAFTPTNIVPGLDYSPDKMLQGRLFSYGDAQRYRLGVNHWQIPVNQPKGVGVENLCPFSRDGQMRFLDNNQGGGPHYYPNNQGIYESQPEHKKPPFPTDGDGYEYNYRQDDDNYFEQPGKLFRLQSEDAKERIFTNTANAMDGVSKDVKVRHIRHCYKADPEYGKGVAKALGIDINQIDLETNQDETYENFK.

The segment at 1–25 (MSKQDGKLTGLFGAPVSDRENSMTA) is disordered. Active-site residues include H56 and N129. Y339 serves as a coordination point for heme.

The protein belongs to the catalase family. Homodimer. Heme is required as a cofactor.

It catalyses the reaction 2 H2O2 = O2 + 2 H2O. Functionally, decomposes hydrogen peroxide into water and oxygen; serves to protect cells from the toxic effects of hydrogen peroxide. The chain is Catalase (katA) from Staphylococcus epidermidis (strain ATCC 35984 / DSM 28319 / BCRC 17069 / CCUG 31568 / BM 3577 / RP62A).